The primary structure comprises 340 residues: Uroporphyrinogen decarboxylase (340 aa).

Substrate contacts are provided by residues 23 to 27, aspartate 72, tyrosine 147, threonine 202, and histidine 316; that span reads RQAGR.

It belongs to the uroporphyrinogen decarboxylase family. As to quaternary structure, homodimer.

It localises to the cytoplasm. It carries out the reaction uroporphyrinogen III + 4 H(+) = coproporphyrinogen III + 4 CO2. The protein operates within porphyrin-containing compound metabolism; protoporphyrin-IX biosynthesis; coproporphyrinogen-III from 5-aminolevulinate: step 4/4. Functionally, catalyzes the decarboxylation of four acetate groups of uroporphyrinogen-III to yield coproporphyrinogen-III. This is Uroporphyrinogen decarboxylase from Trichlorobacter lovleyi (strain ATCC BAA-1151 / DSM 17278 / SZ) (Geobacter lovleyi).